The chain runs to 373 residues: Anhydro-N-acetylmuramic acid kinase (373 aa).

12 to 19 (GTSLDGVD) contributes to the ATP binding site.

It belongs to the anhydro-N-acetylmuramic acid kinase family.

The catalysed reaction is 1,6-anhydro-N-acetyl-beta-muramate + ATP + H2O = N-acetyl-D-muramate 6-phosphate + ADP + H(+). The protein operates within amino-sugar metabolism; 1,6-anhydro-N-acetylmuramate degradation. It functions in the pathway cell wall biogenesis; peptidoglycan recycling. Its function is as follows. Catalyzes the specific phosphorylation of 1,6-anhydro-N-acetylmuramic acid (anhMurNAc) with the simultaneous cleavage of the 1,6-anhydro ring, generating MurNAc-6-P. Is required for the utilization of anhMurNAc either imported from the medium or derived from its own cell wall murein, and thus plays a role in cell wall recycling. The sequence is that of Anhydro-N-acetylmuramic acid kinase from Salmonella agona (strain SL483).